The primary structure comprises 699 residues: Elongation factor G (699 aa).

One can recognise a tr-type G domain in the interval 8–288 (EDYRNFGIMA…AVVDYLPSPI (281 aa)). GTP is bound by residues 17 to 24 (AHIDAGKT), 86 to 90 (DTPGH), and 140 to 143 (NKMD).

The protein belongs to the TRAFAC class translation factor GTPase superfamily. Classic translation factor GTPase family. EF-G/EF-2 subfamily.

The protein resides in the cytoplasm. Its function is as follows. Catalyzes the GTP-dependent ribosomal translocation step during translation elongation. During this step, the ribosome changes from the pre-translocational (PRE) to the post-translocational (POST) state as the newly formed A-site-bound peptidyl-tRNA and P-site-bound deacylated tRNA move to the P and E sites, respectively. Catalyzes the coordinated movement of the two tRNA molecules, the mRNA and conformational changes in the ribosome. This Rhizobium meliloti (strain 1021) (Ensifer meliloti) protein is Elongation factor G.